The sequence spans 234 residues: 2-C-methyl-D-erythritol 4-phosphate cytidylyltransferase (234 aa).

This sequence belongs to the IspD/TarI cytidylyltransferase family. IspD subfamily.

It carries out the reaction 2-C-methyl-D-erythritol 4-phosphate + CTP + H(+) = 4-CDP-2-C-methyl-D-erythritol + diphosphate. Its pathway is isoprenoid biosynthesis; isopentenyl diphosphate biosynthesis via DXP pathway; isopentenyl diphosphate from 1-deoxy-D-xylulose 5-phosphate: step 2/6. Catalyzes the formation of 4-diphosphocytidyl-2-C-methyl-D-erythritol from CTP and 2-C-methyl-D-erythritol 4-phosphate (MEP). The chain is 2-C-methyl-D-erythritol 4-phosphate cytidylyltransferase from Pseudomonas aeruginosa (strain UCBPP-PA14).